The chain runs to 36 residues: Probable non-specific lipid-transfer protein (36 aa).

This sequence belongs to the plant LTP family. Post-translationally, phosphorylated by Ca(2+)-dependent protein kinase.

Its function is as follows. Plant non-specific lipid-transfer proteins transfer phospholipids as well as galactolipids across membranes. May play a role in wax or cutin deposition in the cell walls of expanding epidermal cells and certain secretory tissues. The chain is Probable non-specific lipid-transfer protein from Pinus pinea (Italian stone pine).